The primary structure comprises 137 residues: MGAFPSPPPWGWSTGFITTPLTTGRLPSQHLDPALPKLFWFTPTLPTCPTVAKQFWDTKRTSPDGNLKVANLPSFAISFATAPAALANCPPLPRVISMLCMAVPKGISVEVDSSFFSKNPFPNCTSFFQSIRLSRCI.

The protein belongs to the ycf72 family.

Its subcellular location is the plastid. The protein localises to the chloroplast. This is an uncharacterized protein from Zea mays (Maize).